Reading from the N-terminus, the 387-residue chain is Alkanesulfonate monooxygenase (387 aa).

The protein belongs to the SsuD family.

The enzyme catalyses an alkanesulfonate + FMNH2 + O2 = an aldehyde + FMN + sulfite + H2O + 2 H(+). Functionally, catalyzes the desulfonation of aliphatic sulfonates. This chain is Alkanesulfonate monooxygenase, found in Cupriavidus metallidurans (strain ATCC 43123 / DSM 2839 / NBRC 102507 / CH34) (Ralstonia metallidurans).